Reading from the N-terminus, the 565-residue chain is Urocanate hydratase (565 aa).

NAD(+)-binding positions include G61 to G62, Q139, G185 to G187, E205, R210, N251 to A252, Q272 to H276, Y282 to L283, and Y331. C419 is a catalytic residue. A disordered region spans residues L453–S472. Over residues R463–S472 the composition is skewed to basic and acidic residues. NAD(+) is bound at residue G501.

Belongs to the urocanase family. The cofactor is NAD(+).

It is found in the cytoplasm. The catalysed reaction is 4-imidazolone-5-propanoate = trans-urocanate + H2O. Its pathway is amino-acid degradation; L-histidine degradation into L-glutamate; N-formimidoyl-L-glutamate from L-histidine: step 2/3. In terms of biological role, catalyzes the conversion of urocanate to 4-imidazolone-5-propionate. The sequence is that of Urocanate hydratase from Pseudomonas syringae pv. tomato (strain ATCC BAA-871 / DC3000).